The primary structure comprises 872 residues: Leucine-rich repeat-containing protein 66 (872 aa).

A helical membrane pass occupies residues 4 to 24 (FYVRVTILVTGLCFVETVTTP). Asn45 and Asn108 each carry an N-linked (GlcNAc...) asparagine glycan. LRR repeat units follow at residues 142-164 (RLQV…WKLK), 165-186 (SLRS…DFHG), 189-210 (QLES…AFKG), 213-234 (KLQV…VTIA), and 239-259 (HLEL…VNFQ). The segment at 339 to 363 (LRGMWPQSPVELRDSQDEQVTDRKD) is disordered. Residues 349–363 (ELRDSQDEQVTDRKD) are compositionally biased toward basic and acidic residues. Residues 371–391 (LAICLSVFITFVVAFCLGAFA) traverse the membrane as a helical segment. Over residues 467-483 (QMLGSNGTDPGHQQSPE) the composition is skewed to polar residues. Disordered regions lie at residues 467–501 (QMLG…VLPS), 560–579 (GTFP…SQPR), 695–761 (NYES…SQRI), and 776–872 (LISG…SKHW). Residue Asn472 is glycosylated (N-linked (GlcNAc...) asparagine). The segment covering 484–493 (QLKDSNESRS) has biased composition (basic and acidic residues). Ser718 is modified (phosphoserine). 3 stretches are compositionally biased toward polar residues: residues 725-736 (SVENDGTSQPLP), 746-760 (SVTS…TSQR), and 785-805 (CETN…STWP). Ser752 is subject to Phosphoserine. The span at 831–841 (VDWHYSLRDLE) shows a compositional bias: basic and acidic residues.

It localises to the membrane. This chain is Leucine-rich repeat-containing protein 66 (Lrrc66), found in Mus musculus (Mouse).